Reading from the N-terminus, the 296-residue chain is Pyridoxine/pyridoxal/pyridoxamine kinase (296 aa).

Positions 23 and 59 each coordinate substrate. Residue Asp125 coordinates ATP. Tyr136 is a Mg(2+) binding site. Residues Thr157, Glu162, Thr195, 222 to 225 (HQRV), and Thr232 each bind ATP. Glu162 contacts Mg(2+). Asp234 lines the substrate pocket.

It belongs to the pyridoxine kinase family. PdxK subfamily. In terms of assembly, homodimer. The cofactor is Mg(2+).

The catalysed reaction is pyridoxal + ATP = pyridoxal 5'-phosphate + ADP + H(+). It carries out the reaction pyridoxine + ATP = pyridoxine 5'-phosphate + ADP + H(+). It catalyses the reaction pyridoxamine + ATP = pyridoxamine 5'-phosphate + ADP + H(+). The protein operates within cofactor metabolism; pyridoxal 5'-phosphate salvage; pyridoxal 5'-phosphate from pyridoxal: step 1/1. Its pathway is cofactor metabolism; pyridoxal 5'-phosphate salvage; pyridoxine 5'-phosphate from pyridoxine: step 1/1. It participates in cofactor metabolism; pyridoxal 5'-phosphate salvage; pyridoxamine 5'-phosphate from pyridoxamine: step 1/1. In terms of biological role, B6-vitamer kinase involved in the salvage pathway of pyridoxal 5'-phosphate (PLP). Catalyzes the phosphorylation of pyridoxine (PN), pyridoxal (PL), and pyridoxamine (PM), forming their respective 5'-phosphorylated esters, i.e. PNP, PLP and PMP. This Bordetella avium (strain 197N) protein is Pyridoxine/pyridoxal/pyridoxamine kinase.